Consider the following 353-residue polypeptide: Photosystem II D2 protein (353 aa).

Residue Thr-2 is modified to N-acetylthreonine. Position 2 is a phosphothreonine (Thr-2). Residues 41 to 61 form a helical membrane-spanning segment; the sequence is CAYFALGGWFTGTTFVTSWYT. His-118 is a chlorophyll a binding site. Residues 125-141 form a helical membrane-spanning segment; that stretch reads GFMLRQFELARSVQLRP. The pheophytin a site is built by Gln-130 and Asn-143. Residues 153-166 form a helical membrane-spanning segment; it reads VFVSVFLIYPLGQS. His-198 is a chlorophyll a binding site. The chain crosses the membrane as a helical span at residues 208-228; the sequence is AALLCAIHGATVENLYFEDGD. A plastoquinone contacts are provided by His-215 and Phe-262. Position 215 (His-215) interacts with Fe cation. Position 269 (His-269) interacts with Fe cation. The helical transmembrane segment at 279–295 threads the bilayer; the sequence is GLWMSALGVVGLALNLR.

Belongs to the reaction center PufL/M/PsbA/D family. PSII is composed of 1 copy each of membrane proteins PsbA, PsbB, PsbC, PsbD, PsbE, PsbF, PsbH, PsbI, PsbJ, PsbK, PsbL, PsbM, PsbT, PsbX, PsbY, PsbZ, Psb30/Ycf12, at least 3 peripheral proteins of the oxygen-evolving complex and a large number of cofactors. It forms dimeric complexes. Requires The D1/D2 heterodimer binds P680, chlorophylls that are the primary electron donor of PSII, and subsequent electron acceptors. It shares a non-heme iron and each subunit binds pheophytin, quinone, additional chlorophylls, carotenoids and lipids. There is also a Cl(-1) ion associated with D1 and D2, which is required for oxygen evolution. The PSII complex binds additional chlorophylls, carotenoids and specific lipids. as cofactor.

The protein localises to the plastid. It is found in the chloroplast thylakoid membrane. It catalyses the reaction 2 a plastoquinone + 4 hnu + 2 H2O = 2 a plastoquinol + O2. Its function is as follows. Photosystem II (PSII) is a light-driven water:plastoquinone oxidoreductase that uses light energy to abstract electrons from H(2)O, generating O(2) and a proton gradient subsequently used for ATP formation. It consists of a core antenna complex that captures photons, and an electron transfer chain that converts photonic excitation into a charge separation. The D1/D2 (PsbA/PsbD) reaction center heterodimer binds P680, the primary electron donor of PSII as well as several subsequent electron acceptors. D2 is needed for assembly of a stable PSII complex. The protein is Photosystem II D2 protein of Panax ginseng (Korean ginseng).